The sequence spans 302 residues: Glutaminase (302 aa).

Residues Ser61, Asn111, Glu155, Asn162, Tyr186, Tyr238, and Val256 each coordinate substrate.

It belongs to the glutaminase family. In terms of assembly, homotetramer.

The enzyme catalyses L-glutamine + H2O = L-glutamate + NH4(+). The protein is Glutaminase of Pseudomonas aeruginosa (strain LESB58).